A 484-amino-acid polypeptide reads, in one-letter code: Phosphatidylinositol N-acetylglucosaminyltransferase subunit A (484 aa).

Residues 1–421 (MACRGGAGNG…RLDRLISHCG (421 aa)) are Cytoplasmic-facing. S21 and S24 each carry phosphoserine. Residues 422–442 (PVTGYIFALLAVFNFLFLIFL) form a helical membrane-spanning segment. The Lumenal portion of the chain corresponds to 443-484 (RWMTPDSIIDVAIDATGPRGAWTNNYSHSKRGGENNEISETR). The N-linked (GlcNAc...) asparagine glycan is linked to N467.

The protein belongs to the glycosyltransferase group 1 family. Glycosyltransferase 4 subfamily. As to quaternary structure, component of the glycosylphosphatidylinositol-N-acetylglucosaminyltransferase (GPI-GnT) complex composed at least by PIGA, PIGC, PIGH, PIGP, PIGQ, PIGY and DPM2. Interacts with PIGC, PIGH, PIGP, PIGQ and DPM2. Interacts directly with PIGY; this interaction regulates glycosylphosphatidylinositol-N-acetylglucosaminyltransferase activity. Interacts with PIGQ.

The protein localises to the endoplasmic reticulum membrane. It carries out the reaction a 1,2-diacyl-sn-glycero-3-phospho-(1D-myo-inositol) + UDP-N-acetyl-alpha-D-glucosamine = a 6-(N-acetyl-alpha-D-glucosaminyl)-1-(1,2-diacyl-sn-glycero-3-phospho)-1D-myo-inositol + UDP + H(+). It functions in the pathway glycolipid biosynthesis; glycosylphosphatidylinositol-anchor biosynthesis. In terms of biological role, catalytic subunit of the glycosylphosphatidylinositol-N-acetylglucosaminyltransferase (GPI-GnT) complex that catalyzes the transfer of N-acetylglucosamine from UDP-N-acetylglucosamine to phosphatidylinositol and participates in the first step of GPI biosynthesis. The chain is Phosphatidylinositol N-acetylglucosaminyltransferase subunit A from Homo sapiens (Human).